The sequence spans 206 residues: Endoplasmic reticulum transmembrane protein YET-like (206 aa).

Residues 1 to 2 (ME) are Lumenal-facing. A helical membrane pass occupies residues 3-23 (FLMTLVFLVLLVEIVFCTFFM). The Cytoplasmic portion of the chain corresponds to 24-46 (LPVSMHLRKNVYNKLDKLFGGQN). A helical membrane pass occupies residues 47 to 67 (AKIFLKVLALLVIIVFCDSIV). Residues 68-101 (NSYNINKKLHTPELTGAKFDRQNEYTRMFRYQRN) are Lumenal-facing. The helical transmembrane segment at 102–122 (SYICGFCLYLFFLIYRSQGII) threads the bilayer. The Cytoplasmic portion of the chain corresponds to 123–206 (SQLSNVEASK…KKPKTQKKDD (84 aa)). The stretch at 140 to 198 (KNNLNTVETLLSENEKLKTEIKDLKKMEKEHKAMKSQAENTTKEYLKLQEEYNQLLGKK) forms a coiled coil. The Di-lysine motif signature appears at 203–206 (KKDD).

Belongs to the BCAP29/BCAP31 family.

It is found in the endoplasmic reticulum membrane. May play a role in anterograde transport of membrane proteins from the endoplasmic reticulum to the Golgi. This Dictyostelium discoideum (Social amoeba) protein is Endoplasmic reticulum transmembrane protein YET-like.